The sequence spans 371 residues: Heterodimeric geranylgeranyl pyrophosphate synthase large subunit 1, chloroplastic (371 aa).

The transit peptide at M1–S51 directs the protein to the chloroplast. Residue S52 is modified to N-acetylserine. Isopentenyl diphosphate contacts are provided by K116, R119, and H148. Mg(2+) contacts are provided by D155 and D161. Dimethylallyl diphosphate is bound at residue R166. Position 167 (R167) interacts with isopentenyl diphosphate. Dimethylallyl diphosphate-binding residues include K256, T257, Q294, K311, and K321.

The protein belongs to the FPP/GGPP synthase family. In terms of assembly, forms homodimers. Part of a heterodimeric geranyl(geranyl)diphosphate synthase. Interacts with GGR. Mg(2+) serves as cofactor. Expressed ubiquitously.

Its subcellular location is the plastid. The protein localises to the chloroplast. The protein resides in the cytoplasm. It catalyses the reaction isopentenyl diphosphate + dimethylallyl diphosphate = (2E)-geranyl diphosphate + diphosphate. It carries out the reaction isopentenyl diphosphate + (2E)-geranyl diphosphate = (2E,6E)-farnesyl diphosphate + diphosphate. The catalysed reaction is isopentenyl diphosphate + (2E,6E)-farnesyl diphosphate = (2E,6E,10E)-geranylgeranyl diphosphate + diphosphate. The protein operates within isoprenoid biosynthesis; farnesyl diphosphate biosynthesis; farnesyl diphosphate from geranyl diphosphate and isopentenyl diphosphate: step 1/1. Its pathway is isoprenoid biosynthesis; geranyl diphosphate biosynthesis; geranyl diphosphate from dimethylallyl diphosphate and isopentenyl diphosphate: step 1/1. It functions in the pathway isoprenoid biosynthesis; geranylgeranyl diphosphate biosynthesis; geranylgeranyl diphosphate from farnesyl diphosphate and isopentenyl diphosphate: step 1/1. Functionally, heterodimeric geranyl(geranyl)-diphosphate (GPP) synthase large subunit. In vitro, the large subunit catalyzes mainly the trans-addition of the three molecules of IPP onto DMAPP to form geranylgeranyl pyrophosphate while the small subunit alone is inactive. Upon association of the two subunits, the product profile changes and the production of gerany-diphosphate is strongly increased. In Arabidopsis thaliana (Mouse-ear cress), this protein is Heterodimeric geranylgeranyl pyrophosphate synthase large subunit 1, chloroplastic (GGPPS1).